The sequence spans 50 residues: Large ribosomal subunit protein bL33A (50 aa).

The protein belongs to the bacterial ribosomal protein bL33 family.

This Streptococcus thermophilus (strain CNRZ 1066) protein is Large ribosomal subunit protein bL33A.